Consider the following 318-residue polypeptide: Cobalamin biosynthesis protein CobD (318 aa).

Transmembrane regions (helical) follow at residues 51-71, 77-97, 153-173, 206-226, and 296-316; these read VGGVLLLLLAVGITAGAAWGA, LVHPLAGVVVSALLGWTCLAA, DGVIAPLLFFMIGGAPLALAY, LIPARLTGLLMTLAAPLAGLS, and MYGAECLLVLLAAVMTTILTI.

This sequence belongs to the CobD/CbiB family.

Its subcellular location is the cell membrane. It functions in the pathway cofactor biosynthesis; adenosylcobalamin biosynthesis. Its function is as follows. Converts cobyric acid to cobinamide by the addition of aminopropanol on the F carboxylic group. The chain is Cobalamin biosynthesis protein CobD from Geobacter metallireducens (strain ATCC 53774 / DSM 7210 / GS-15).